The sequence spans 122 residues: Large ribosomal subunit protein uL14 (122 aa).

Belongs to the universal ribosomal protein uL14 family. In terms of assembly, part of the 50S ribosomal subunit. Forms a cluster with proteins L3 and L19. In the 70S ribosome, L14 and L19 interact and together make contacts with the 16S rRNA in bridges B5 and B8.

Binds to 23S rRNA. Forms part of two intersubunit bridges in the 70S ribosome. In Acinetobacter baumannii (strain SDF), this protein is Large ribosomal subunit protein uL14.